Consider the following 100-residue polypeptide: Small ribosomal subunit protein uS14c (100 aa).

This sequence belongs to the universal ribosomal protein uS14 family. In terms of assembly, part of the 30S ribosomal subunit.

The protein resides in the plastid. It localises to the chloroplast. Functionally, binds 16S rRNA, required for the assembly of 30S particles. The polypeptide is Small ribosomal subunit protein uS14c (Guillardia theta (Cryptophyte)).